The following is a 710-amino-acid chain: Prolyl endopeptidase (710 aa).

An N-acetylmethionine modification is found at methionine 1. Lysine 157 is subject to N6-acetyllysine. Active-site charge relay system residues include serine 554, aspartate 641, and histidine 680.

This sequence belongs to the peptidase S9A family. As to expression, expressed in all tissues tested: uterus, kidney, heart, lung, small intestine, smooth muscle, liver, spleen, thymus, adrenal, pituitary and whole brain.

It localises to the cytoplasm. It catalyses the reaction Hydrolysis of Pro-|-Xaa &gt;&gt; Ala-|-Xaa in oligopeptides.. With respect to regulation, inhibited by DFP, Z-Pro-prolinal and poststatin, but not by PMSF, SBTI, EDTA, leupeptin, E-64 and pepstatin. Its function is as follows. Cleaves peptide bonds on the C-terminal side of prolyl residues within peptides that are up to approximately 30 amino acids long. Has high activity on the succinyl- (suc-) peptide-4-methylcoumaryl-7-amide (MCA) substrates suc-Gly-Pro-Leu-Gly-Pro-MCA, suc-Gly-Pro-MCA and suc-Ala-Ala-Ala-MCA. This chain is Prolyl endopeptidase, found in Rattus norvegicus (Rat).